The primary structure comprises 739 residues: Gamma-tubulin complex component 4 homolog (739 aa).

The protein belongs to the TUBGCP family.

It is found in the cytoplasm. The protein resides in the cytoskeleton. The protein localises to the microtubule organizing center. Gamma-tubulin complex is necessary for microtubule nucleation at the microtubule organizing centers (MTOCs). This chain is Gamma-tubulin complex component 4 homolog (85P), found in Medicago truncatula (Barrel medic).